Consider the following 210-residue polypeptide: MNKKKRYEILSILSRNNPEPKIELFFSSDFELLLSVILSAQSTDFIVNKTTKILFKIANTPETIFLLGLERLKNYIKDIGLYNTKALNIIRTSFIILTKYNSIVPNNRIELESLPGVGRKTANIILNILFKKKTIAVDTHVFRVCNRTNFAKGKNVKIVEEKLIKVVPSIFKLNFHSWFILHGRYICTARKIKCNICLIFKLCEFKQKIF.

The region spanning 108-127 is the HhH domain; the sequence is RIELESLPGVGRKTANIILN. C187, C194, C197, and C203 together coordinate [4Fe-4S] cluster.

The protein belongs to the Nth/MutY family. [4Fe-4S] cluster is required as a cofactor.

It catalyses the reaction 2'-deoxyribonucleotide-(2'-deoxyribose 5'-phosphate)-2'-deoxyribonucleotide-DNA = a 3'-end 2'-deoxyribonucleotide-(2,3-dehydro-2,3-deoxyribose 5'-phosphate)-DNA + a 5'-end 5'-phospho-2'-deoxyribonucleoside-DNA + H(+). Functionally, DNA repair enzyme that has both DNA N-glycosylase activity and AP-lyase activity. The DNA N-glycosylase activity releases various damaged pyrimidines from DNA by cleaving the N-glycosidic bond, leaving an AP (apurinic/apyrimidinic) site. The AP-lyase activity cleaves the phosphodiester bond 3' to the AP site by a beta-elimination, leaving a 3'-terminal unsaturated sugar and a product with a terminal 5'-phosphate. This chain is Endonuclease III, found in Buchnera aphidicola subsp. Acyrthosiphon pisum (strain APS) (Acyrthosiphon pisum symbiotic bacterium).